The sequence spans 68 residues: Small integral membrane protein 10-like protein 3 (68 aa).

The protein is Small integral membrane protein 10-like protein 3 of Homo sapiens (Human).